We begin with the raw amino-acid sequence, 436 residues long: GTPase Obg (436 aa).

In terms of domain architecture, Obg spans 2–160 (SMFLDTAKIK…RELQLELKIL (159 aa)). The region spanning 161 to 338 (ADVGLVGFPS…LLDATAELLD (178 aa)) is the OBG-type G domain. GTP-binding positions include 167–174 (GFPSVGKS), 192–196 (FTTIV), 214–217 (DLPG), 284–287 (NKMD), and 319–321 (SGL). Positions 174 and 194 each coordinate Mg(2+). One can recognise an OCT domain in the interval 358 to 436 (GFDEEEKAFE…IGKFEFEFVD (79 aa)).

It belongs to the TRAFAC class OBG-HflX-like GTPase superfamily. OBG GTPase family. Monomer. Mg(2+) is required as a cofactor.

It is found in the cytoplasm. Its function is as follows. An essential GTPase which binds GTP, GDP and possibly (p)ppGpp with moderate affinity, with high nucleotide exchange rates and a fairly low GTP hydrolysis rate. Plays a role in control of the cell cycle, stress response, ribosome biogenesis and in those bacteria that undergo differentiation, in morphogenesis control. The sequence is that of GTPase Obg from Streptococcus pneumoniae serotype 2 (strain D39 / NCTC 7466).